The chain runs to 180 residues: Adenine phosphoribosyltransferase (180 aa).

This sequence belongs to the purine/pyrimidine phosphoribosyltransferase family. In terms of assembly, homodimer.

The protein resides in the cytoplasm. It carries out the reaction AMP + diphosphate = 5-phospho-alpha-D-ribose 1-diphosphate + adenine. It participates in purine metabolism; AMP biosynthesis via salvage pathway; AMP from adenine: step 1/1. Functionally, catalyzes a salvage reaction resulting in the formation of AMP, that is energically less costly than de novo synthesis. This is Adenine phosphoribosyltransferase from Haemophilus influenzae (strain 86-028NP).